Reading from the N-terminus, the 273-residue chain is Large ribosomal subunit protein uL2 (273 aa).

The tract at residues 221 to 263 is disordered; that stretch reads RGTAMNPVDHPHGGGEGRNFGKHPVTPWGVQTKGKKTRHNKRT. Positions 253–263 are enriched in basic residues; that stretch reads KGKKTRHNKRT.

Belongs to the universal ribosomal protein uL2 family. As to quaternary structure, part of the 50S ribosomal subunit. Forms a bridge to the 30S subunit in the 70S ribosome.

In terms of biological role, one of the primary rRNA binding proteins. Required for association of the 30S and 50S subunits to form the 70S ribosome, for tRNA binding and peptide bond formation. It has been suggested to have peptidyltransferase activity; this is somewhat controversial. Makes several contacts with the 16S rRNA in the 70S ribosome. The protein is Large ribosomal subunit protein uL2 of Histophilus somni (strain 2336) (Haemophilus somnus).